Reading from the N-terminus, the 440-residue chain is Protein EFFECTOR OF TRANSCRIPTION (440 aa).

The GIY-YIG domain maps to 131–167 (SIQGLGVAVNIHDADDISHGQTESIRTRLRSYGRPVP). Positions 172–216 (LGDNASQTITQKKTGGRSKDKKHGFEEERDVSRVEAEENNTNSVH) are disordered. A compositionally biased stretch (polar residues) spans 175-184 (NASQTITQKK). Basic and acidic residues predominate over residues 194–207 (HGFEEERDVSRVEA). 2 Cx9Cx9RCx2HK repeats span residues 247–272 (CGVL…TEHK) and 295–320 (CGVI…EDHK). Positions 339–363 (ILKEDKSKPKTRTSSTNQEEPGESL) are disordered. 2 Cx9Cx9RCx2HK repeats span residues 365-390 (CEAT…WQHK) and 409-434 (CGVK…QEHK).

The protein resides in the nucleus. Transcription regulator that negatively modulates gibberellin-mediated developmental processes. May act as transcriptional repressor of giberellin controlled genes. Binds DNA without sequence preference. This chain is Protein EFFECTOR OF TRANSCRIPTION, found in Brassica napus (Rape).